The sequence spans 77 residues: Conotoxin ArMKLT2-0251 (77 aa).

Positions 1-22 (MKLTCVLIVAVLILTACQLIAA) are cleaved as a signal peptide. The propeptide occupies 23 to 46 (DDSRDLKRFSRRKMRDGMLNTKNM). A Pyrrolidone carboxylic acid modification is found at Gln-49. Disulfide bonds link Cys-50–Cys-65, Cys-57–Cys-68, and Cys-64–Cys-73.

This sequence belongs to the conotoxin O1 superfamily. Expressed by the venom duct.

Its subcellular location is the secreted. In Conus arenatus (Sand-dusted cone), this protein is Conotoxin ArMKLT2-0251.